The following is a 90-amino-acid chain: uncharacterized protein (90 aa).

Residues 62–90 (RQLKKKQAYKPDPEASFSWSANTSTRGRR) are disordered. Positions 78–90 (FSWSANTSTRGRR) are enriched in polar residues.

This is an uncharacterized protein from Escherichia coli (strain K12).